Reading from the N-terminus, the 642-residue chain is Probable glutamate--tRNA ligase, cytoplasmic (642 aa).

152 to 154 (RFP) contributes to the L-glutamate binding site. The short motif at 157–166 (PNGRLHIGHA) is the 'HIGH' region element. H162 contacts ATP. L-glutamate contacts are provided by residues D188, 326-330 (YDFAC), and R344. ATP is bound by residues E347 and 382–386 (VLSKR). A 'KMSKS' region motif is present at residues 382 to 386 (VLSKR).

It belongs to the class-I aminoacyl-tRNA synthetase family. Glutamate--tRNA ligase type 2 subfamily.

It localises to the cytoplasm. It catalyses the reaction tRNA(Glu) + L-glutamate + ATP = L-glutamyl-tRNA(Glu) + AMP + diphosphate. This Encephalitozoon cuniculi (strain GB-M1) (Microsporidian parasite) protein is Probable glutamate--tRNA ligase, cytoplasmic.